Here is a 564-residue protein sequence, read N- to C-terminus: ATP-dependent RNA helicase ROK1 (564 aa).

Disordered stretches follow at residues 1–45 (MDIF…ESQI) and 62–87 (EDDR…DGLI). Basic and acidic residues-rich tracts occupy residues 13 to 23 (VKKESGPKAKA), 33 to 45 (DENH…ESQI), and 62 to 86 (EDDR…DDGL). The Q motif signature appears at 122–150 (DLISRFSFDKRLLNNLIENGFTEPTPIQC). In terms of domain architecture, Helicase ATP-binding spans 153-333 (IPVALNNRDV…QSIMMDPVRV (181 aa)). 166-173 (GPTGSGKT) lines the ATP pocket. The short motif at 280–283 (DEAD) is the DEAD box element. Residues 344–506 (NIEQKLIFCG…EVSEWMDKMA (163 aa)) form the Helicase C-terminal domain. The disordered stretch occupies residues 512–564 (EKESIKNGKAHKERKQITTVPKMDKAKRRRQQEMIAASKRRKNEELSKKHFSK). Residues 553–564 (KNEELSKKHFSK) show a composition bias toward basic and acidic residues.

This sequence belongs to the DEAD box helicase family. DDX52/ROK1 subfamily. In terms of assembly, interacts with the U3 snoRNA and is associated with the 90S and 40S pre-ribosomes. This association requires the presence of RRP5. Also interacts with OSH3.

Its subcellular location is the nucleus. The protein resides in the nucleolus. It catalyses the reaction ATP + H2O = ADP + phosphate + H(+). ATP-dependent RNA helicase involved in 40S ribosomal subunit biogenesis. Required for the processing and cleavage of 35S pre-rRNA at sites A0, A1, and A2, leading to mature 18S rRNA. May also have a gene-specific regulatory function since it affects nuclear fusion by regulating KAR4 expression and contributes with KEM1 to ISP-1 sensitivity. The protein is ATP-dependent RNA helicase ROK1 (ROK1) of Saccharomyces cerevisiae (strain ATCC 204508 / S288c) (Baker's yeast).